Here is a 283-residue protein sequence, read N- to C-terminus: Protoheme IX farnesyltransferase 1 (283 aa).

9 helical membrane passes run 14–34 (IALM…TKVD), 35–55 (PVAL…SAVF), 84–104 (LGFA…NAAF), 107–127 (VVAL…TVWL), 133–153 (TNII…AAAV), 163–183 (VLAL…AILL), 208–228 (ILAN…LGLL), 231–251 (VYGF…VVLV), and 258–278 (WAGW…IAVF).

Belongs to the UbiA prenyltransferase family. Protoheme IX farnesyltransferase subfamily.

It is found in the cell inner membrane. The catalysed reaction is heme b + (2E,6E)-farnesyl diphosphate + H2O = Fe(II)-heme o + diphosphate. Its pathway is porphyrin-containing compound metabolism; heme O biosynthesis; heme O from protoheme: step 1/1. Its function is as follows. Converts heme B (protoheme IX) to heme O by substitution of the vinyl group on carbon 2 of heme B porphyrin ring with a hydroxyethyl farnesyl side group. The sequence is that of Protoheme IX farnesyltransferase 1 from Paramagnetospirillum magneticum (strain ATCC 700264 / AMB-1) (Magnetospirillum magneticum).